A 713-amino-acid chain; its full sequence is Polyribonucleotide nucleotidyltransferase (713 aa).

D498 and D504 together coordinate Mg(2+). One can recognise a KH domain in the interval 565-631 (PRILSLKVPV…RIEDLTREAK (67 aa)). Residues 633-701 (GEIYEGTVTR…ERGKIDLIRP (69 aa)) enclose the S1 motif domain.

It belongs to the polyribonucleotide nucleotidyltransferase family. Requires Mg(2+) as cofactor.

The protein resides in the cytoplasm. The catalysed reaction is RNA(n+1) + phosphate = RNA(n) + a ribonucleoside 5'-diphosphate. Its function is as follows. Involved in mRNA degradation. Catalyzes the phosphorolysis of single-stranded polyribonucleotides processively in the 3'- to 5'-direction. This chain is Polyribonucleotide nucleotidyltransferase, found in Thermus thermophilus (strain ATCC 27634 / DSM 579 / HB8).